The sequence spans 457 residues: Argininosuccinate lyase (457 aa).

This sequence belongs to the lyase 1 family. Argininosuccinate lyase subfamily.

The protein localises to the cytoplasm. The catalysed reaction is 2-(N(omega)-L-arginino)succinate = fumarate + L-arginine. It participates in amino-acid biosynthesis; L-arginine biosynthesis; L-arginine from L-ornithine and carbamoyl phosphate: step 3/3. In Pectobacterium carotovorum subsp. carotovorum (strain PC1), this protein is Argininosuccinate lyase.